The following is a 259-amino-acid chain: MSAGPLQAAPKKNYGALIGAGPAVGGAAFNRTLSEVASYERSRRDHATPDYRIKIVVVGDGATGKTSLLMSYTQGQFPEDYVPTIFENYVTNIEGPRGKVIELALWDTAGQEEYSRLRPLSYGDVDIVMVCYAADNRTSLTNAEELWFPEVRHFCPHAPMMLVGLKSDLYSLDALDRLVDPTDAELVARKMGAFVHLQCSAKTRQCLEDVFNTAIHTALYDELRAPPQRGVKGMFKKKQQRDPQAQSYKRVRKHRCVVL.

59 to 66 (GDGATGKT) is a GTP binding site. An Effector region motif is present at residues 81–89 (YVPTIFENY). Residues 107–111 (DTAGQ) and 165–168 (LKSD) each bind GTP. Cys-256 carries the cysteine methyl ester modification. Cys-256 carries the S-geranylgeranyl cysteine lipid modification. The propeptide at 257-259 (VVL) is removed in mature form.

Belongs to the small GTPase superfamily. Rho family.

Its subcellular location is the cell membrane. This is GTP-binding protein RHO4 (RHO4) from Eremothecium gossypii (strain ATCC 10895 / CBS 109.51 / FGSC 9923 / NRRL Y-1056) (Yeast).